A 251-amino-acid chain; its full sequence is E3 ubiquitin-protein ligase MARCHF3 (251 aa).

An RING-CH-type zinc finger spans residues glutamine 61–glutamate 121. Zn(2+) contacts are provided by cysteine 69, cysteine 72, cysteine 85, cysteine 87, histidine 95, cysteine 98, cysteine 111, and cysteine 114. The next 2 membrane-spanning stretches (helical) occupy residues leucine 143–leucine 163 and alanine 180–valine 200.

It is found in the cytoplasmic vesicle membrane. The protein resides in the early endosome membrane. The enzyme catalyses S-ubiquitinyl-[E2 ubiquitin-conjugating enzyme]-L-cysteine + [acceptor protein]-L-lysine = [E2 ubiquitin-conjugating enzyme]-L-cysteine + N(6)-ubiquitinyl-[acceptor protein]-L-lysine.. It participates in protein modification; protein ubiquitination. Its function is as follows. E3 ubiquitin-protein ligase which may be involved in endosomal trafficking. E3 ubiquitin ligases accept ubiquitin from an E2 ubiquitin-conjugating enzyme in the form of a thioester and then directly transfer the ubiquitin to targeted substrates. This is E3 ubiquitin-protein ligase MARCHF3 (marchf3) from Xenopus tropicalis (Western clawed frog).